Here is a 280-residue protein sequence, read N- to C-terminus: MRLYRDRAVVLRQHKLGEADRIVTLLTRDHGLVRAVAKGVRRTRSKFGARLEPFAHIDVQLHPGRNLDIVTQVQAIDAFAADIVSDYGRYTTACAMLETAERLAGEERAPMPDLHRLTVAALRAIADGRRARELVLDSYLLRAMAIAGWAPALTECARCAAPGPHRAFHVAAGGSVCVHCRPSGSSTPPQAVLELMSALHDGDWEYAESSTPPHRSQASGLIAAHLQWHLERQLRTLPLVERGYRVDRTVAEQRAALVRQDMAHGNHTGQEDLPATASGA.

The disordered stretch occupies residues 261–280 (DMAHGNHTGQEDLPATASGA).

This sequence belongs to the RecO family.

Functionally, involved in DNA repair and RecF pathway recombination. This chain is DNA repair protein RecO, found in Mycolicibacterium smegmatis (strain ATCC 700084 / mc(2)155) (Mycobacterium smegmatis).